The sequence spans 211 residues: Imidazole glycerol phosphate synthase subunit HisH (211 aa).

Residues 3 to 211 (VVAVIDYEMG…VSQVREKIAA (209 aa)) form the Glutamine amidotransferase type-1 domain. C81 serves as the catalytic Nucleophile. Residues H186 and E188 contribute to the active site.

Heterodimer of HisH and HisF.

The protein resides in the cytoplasm. The enzyme catalyses 5-[(5-phospho-1-deoxy-D-ribulos-1-ylimino)methylamino]-1-(5-phospho-beta-D-ribosyl)imidazole-4-carboxamide + L-glutamine = D-erythro-1-(imidazol-4-yl)glycerol 3-phosphate + 5-amino-1-(5-phospho-beta-D-ribosyl)imidazole-4-carboxamide + L-glutamate + H(+). It carries out the reaction L-glutamine + H2O = L-glutamate + NH4(+). It participates in amino-acid biosynthesis; L-histidine biosynthesis; L-histidine from 5-phospho-alpha-D-ribose 1-diphosphate: step 5/9. IGPS catalyzes the conversion of PRFAR and glutamine to IGP, AICAR and glutamate. The HisH subunit catalyzes the hydrolysis of glutamine to glutamate and ammonia as part of the synthesis of IGP and AICAR. The resulting ammonia molecule is channeled to the active site of HisF. This Trichormus variabilis (strain ATCC 29413 / PCC 7937) (Anabaena variabilis) protein is Imidazole glycerol phosphate synthase subunit HisH.